The primary structure comprises 188 residues: Peptide deformylase (188 aa).

2 residues coordinate Fe cation: Cys94 and His136. Residue Glu137 is part of the active site. Fe cation is bound at residue His140.

It belongs to the polypeptide deformylase family. Requires Fe(2+) as cofactor.

The enzyme catalyses N-terminal N-formyl-L-methionyl-[peptide] + H2O = N-terminal L-methionyl-[peptide] + formate. Functionally, removes the formyl group from the N-terminal Met of newly synthesized proteins. Requires at least a dipeptide for an efficient rate of reaction. N-terminal L-methionine is a prerequisite for activity but the enzyme has broad specificity at other positions. The chain is Peptide deformylase from Chlorobium phaeobacteroides (strain DSM 266 / SMG 266 / 2430).